The following is a 318-amino-acid chain: Probable mitochondrial 2-oxoglutarate/malate carrier protein (318 aa).

3 Solcar repeats span residues 22 to 111 (QSQL…IKDI), 119 to 210 (LPFT…TKQL), and 219 to 309 (DDIK…LNIL). Helical transmembrane passes span 28-48 (FVIG…IDSL), 79-99 (GFFT…TYTT), 125-145 (IMVG…ADLT), 185-205 (GCSP…SSYD), 225-245 (LIAS…LDVI), and 281-301 (FYKG…LTFI).

Belongs to the mitochondrial carrier (TC 2.A.29) family.

It is found in the mitochondrion inner membrane. Mitochondrial solute carriers shuttle metabolites, nucleotides, and cofactors through the mitochondrial inner membrane. Catalyzes the transport of 2-oxoglutarate across the inner mitochondrial membrane in an electroneutral exchange for malate or other dicarboxylic acids, and plays an important role in several metabolic processes, including the malate-aspartate shuttle, the oxoglutarate/isocitrate shuttle, in gluconeogenesis from lactate, and in nitrogen metabolism. The polypeptide is Probable mitochondrial 2-oxoglutarate/malate carrier protein (ucpC) (Dictyostelium discoideum (Social amoeba)).